We begin with the raw amino-acid sequence, 883 residues long: Valine--tRNA ligase (883 aa).

The 'HIGH' region signature appears at 52 to 62 (PNVTGRLHLGH). The 'KMSKS' region motif lies at 529–533 (KMSKS). K532 contributes to the ATP binding site. A coiled-coil region spans residues 813–848 (LEGLIDFDKEIKRLENELAKWTKEVERVQKKLSNQG).

It belongs to the class-I aminoacyl-tRNA synthetase family. ValS type 1 subfamily. Monomer.

It is found in the cytoplasm. The catalysed reaction is tRNA(Val) + L-valine + ATP = L-valyl-tRNA(Val) + AMP + diphosphate. Catalyzes the attachment of valine to tRNA(Val). As ValRS can inadvertently accommodate and process structurally similar amino acids such as threonine, to avoid such errors, it has a 'posttransfer' editing activity that hydrolyzes mischarged Thr-tRNA(Val) in a tRNA-dependent manner. The protein is Valine--tRNA ligase of Oceanobacillus iheyensis (strain DSM 14371 / CIP 107618 / JCM 11309 / KCTC 3954 / HTE831).